Reading from the N-terminus, the 243-residue chain is Protein IN2-1 homolog A (243 aa).

The 82-residue stretch at 31 to 112 (GTTRLYICYF…YIDSHFEGPA (82 aa)) folds into the GST N-terminal domain. Residues Lys-70, Val-84, and 96-97 (ES) contribute to the glutathione site. The region spanning 117–240 (DPEKRQFADE…YLLDLAKTHL (124 aa)) is the GST C-terminal domain.

It belongs to the GST superfamily. HSP26 family.

In Oryza sativa subsp. japonica (Rice), this protein is Protein IN2-1 homolog A.